A 309-amino-acid polypeptide reads, in one-letter code: Ribosomal RNA small subunit methyltransferase H (309 aa).

S-adenosyl-L-methionine is bound by residues 33-35 (GGH), Asp-53, Phe-79, Asp-100, and Gln-107.

Belongs to the methyltransferase superfamily. RsmH family.

Its subcellular location is the cytoplasm. The catalysed reaction is cytidine(1402) in 16S rRNA + S-adenosyl-L-methionine = N(4)-methylcytidine(1402) in 16S rRNA + S-adenosyl-L-homocysteine + H(+). In terms of biological role, specifically methylates the N4 position of cytidine in position 1402 (C1402) of 16S rRNA. This Clostridium botulinum (strain ATCC 19397 / Type A) protein is Ribosomal RNA small subunit methyltransferase H.